A 220-amino-acid chain; its full sequence is Ribosomal RNA large subunit methyltransferase E (220 aa).

5 residues coordinate S-adenosyl-L-methionine: Gly-64, Trp-66, Asp-92, Asp-108, and Asp-133. The active-site Proton acceptor is the Lys-173.

The protein belongs to the class I-like SAM-binding methyltransferase superfamily. RNA methyltransferase RlmE family.

It is found in the cytoplasm. The catalysed reaction is uridine(2552) in 23S rRNA + S-adenosyl-L-methionine = 2'-O-methyluridine(2552) in 23S rRNA + S-adenosyl-L-homocysteine + H(+). In terms of biological role, specifically methylates the uridine in position 2552 of 23S rRNA at the 2'-O position of the ribose in the fully assembled 50S ribosomal subunit. The polypeptide is Ribosomal RNA large subunit methyltransferase E (Acidovorax sp. (strain JS42)).